Consider the following 115-residue polypeptide: Ig heavy chain V-III region W3082 (115 aa).

The Ig-like domain occupies 1–114 (EVKLEESGGG…WGQGTLVTVS (114 aa)). An intrachain disulfide couples C22 to C98.

The chain is Ig heavy chain V-III region W3082 from Mus musculus (Mouse).